The primary structure comprises 1577 residues: Dynamin-binding protein (1577 aa).

At Met-1 the chain carries N-acetylmethionine. 4 SH3 domains span residues 2–61 (EAGS…IVTI), 66–126 (EGER…ELCL), 145–204 (YSMG…LLGP), and 243–302 (EPGT…LCPD). Disordered regions lie at residues 211 to 244 (SVSS…EEEP) and 335 to 395 (EEQR…WEMP). A compositionally biased stretch (acidic residues) spans 230 to 244 (VGEEEIGPDEDEEEP). The segment covering 335–344 (EEQRHETSDH) has biased composition (basic and acidic residues). Ser-496 is subject to Phosphoserine. Disordered stretches follow at residues 591–624 (GSSK…TSPH) and 639–659 (VRPS…NAVS). Residues 639–649 (VRPSRPAPLPP) show a composition bias toward pro residues. The residue at position 684 (Ser-684) is a Phosphoserine. Positions 693–757 (LVLVRIEEME…ELQQLREMTL (65 aa)) form a coiled coil. A DH domain is found at 784 to 967 (KRAKVIEELL…KEINVNINEY (184 aa)). The 210-residue stretch at 1008–1217 (LKHLTGFAPQ…LKVAGREGNL (210 aa)) folds into the BAR domain. Positions 1136 to 1173 (ERAEKLKDKKTLEELQSARNNYEALNAQLLDELPKFHQ) form a coiled coil. In terms of domain architecture, SH3 5 spans 1285–1348 (PPEKLFQAER…YSSFLKPYNP (64 aa)). The tract at residues 1348 to 1487 (PRRSHSDASV…SVPGRNGQSQ (140 aa)) is disordered. Residues 1376–1405 (RQNSGSTLTFNPSSMAVSFTSGSCQKQPQD) show a composition bias toward polar residues. Residues 1419–1442 (SASLNPSNSESSPSRCPSDPDSTS) are compositionally biased toward low complexity. The SH3 6 domain occupies 1513–1576 (EGNQVYFAVY…PSNYIRKTEY (64 aa)).

As to quaternary structure, binds DNM1 via its N-terminal SH3 domains. The C-terminal SH3 domain binds a complex containing actin, tubulin, Hsp70 and actin-regulatory proteins, such as ENAH, EVL, WIRE, CR16, WAVE1 and NAP1L1. Interacts with FASLG. Interacts (via SH3 domain 6) with WASL. Interacts (via SH3 domain 6) interacts with ENAH. Interacts (via C-terminal domain) with TJP1; required for the apical cell-cell junction localization of DNMBP. (Microbial infection) Interacts (via SH3 domain 6) with L.monocytogenes InlC. Detected in heart, brain, lung, liver, skeletal muscle, kidney and pancreas.

It localises to the cytoplasm. The protein localises to the golgi apparatus. Its subcellular location is the golgi stack. It is found in the cytoskeleton. The protein resides in the synapse. It localises to the cell junction. Plays a critical role as a guanine nucleotide exchange factor (GEF) for CDC42 in several intracellular processes associated with the actin and microtubule cytoskeleton. Regulates the structure of apical junctions through F-actin organization in epithelial cells. Participates in the normal lumenogenesis of epithelial cell cysts by regulating spindle orientation. Plays a role in ciliogenesis. May play a role in membrane trafficking between the cell surface and the Golgi. This Homo sapiens (Human) protein is Dynamin-binding protein.